The following is a 781-amino-acid chain: Catenin beta-1 (781 aa).

Ala2 is modified (N-acetylalanine). Positions 2 to 23 (ATQADLMELDMAMEPDRKAAVS) are interaction with VCL. A Phosphoserine; by GSK3-beta; alternate modification is found at Ser23. A glycan (O-linked (GlcNAc) serine; alternate) is linked at Ser23. Ser29 bears the Phosphoserine; by GSK3-beta mark. A phosphoserine; by GSK3-beta and HIPK2 mark is found at Ser33 and Ser37. Residues 34-57 (GIHSGATTTAPSLSGKGNPEEEDV) form a disordered region. At Thr41 the chain carries Phosphothreonine; by GSK3-beta. Ser45 is modified (phosphoserine). N6-acetyllysine is present on Lys49. The residue at position 64 (Tyr64) is a Phosphotyrosine; by PTK6. Tyr142 carries the phosphotyrosine; by FYN and PTK6 modification. 12 ARM repeats span residues 151 to 191 (RAIP…IMRS), 193 to 234 (QMVS…IFKS), 235 to 276 (GGIP…VRLA), 277 to 318 (GGLQ…ILAS), 319 to 360 (GGPQ…IVEA), 361 to 389 (GGMQ…RNLS), 400 to 441 (GLLG…VCQV), 442 to 484 (GGIE…AQNA), 489 to 530 (YGLP…LREQ), 531 to 571 (GAIP…EIVE), 594 to 636 (NTIP…AEGA), and 637 to 666 (TAPL…SEDK). The segment at 156 to 178 (LTKLLNDEDQVVVNKAAVMVHQL) is interaction with BCL9. Position 191 is a phosphoserine (Ser191). Ser246 is modified (phosphoserine; by CDK5). Phosphotyrosine is present on residues Tyr331 and Tyr333. Residue Ser552 is modified to Phosphoserine; by AMPK. Residue Thr556 is modified to Phosphothreonine. Residue Cys619 is modified to S-nitrosocysteine. Ser675 is modified (phosphoserine). Residues 720-781 (HSGGYGQDAL…NQLAWFDTDL (62 aa)) form a disordered region. Positions 734 to 745 (MMEHEMGGHHPG) are enriched in basic and acidic residues. The interaction with SCRIB stretch occupies residues 772–781 (NQLAWFDTDL).

This sequence belongs to the beta-catenin family. In terms of assembly, two separate complex-associated pools are found in the cytoplasm. The majority is present as component of an E-cadherin/ catenin adhesion complex composed of at least E-cadherin/CDH1 and beta-catenin/CTNNB1, and possibly alpha-catenin/CTNNA1; the complex is located to adherens junctions. The stable association of CTNNA1 is controversial as CTNNA1 was shown not to bind to F-actin when assembled in the complex. Alternatively, the CTNNA1-containing complex may be linked to F-actin by other proteins such as LIMA1. Binds NHERF1. Interacts with PTPRU (via the cytoplasmic juxtamembrane domain) and with EMD. Interacts with SESTD1 and TRPC4. Interacts with CAV1. Interacts with PTPRJ. Interacts with PKT7. Interacts with FAT1 (via the cytoplasmic domain). Interacts with CDK2, NDRG2 and NANOS1. Interacts with NEK2 and CDK5. Interacts with CARM1, CXADR, PCDH11Y and PTK6. Interacts with RAPGEF2. Interacts with SOX7; this interaction may lead to proteasomal degradation of active CTNNB1 and thus inhibition of Wnt/beta-catenin-stimulated transcription. Identified in a complex with HINT1 and MITF. Interacts with FHIT. Interacts with FERMT2. Identified in a complex with TCF4 and FERMT2. Another cytoplasmic pool is part of a large complex containing AXIN1, AXIN2, APC, CSNK1A1 and GSK3B that promotes phosphorylation on N-terminal Ser and Thr residues and ubiquitination of CTNNB1 via BTRC and its subsequent degradation by the proteasome. Wnt-dependent activation of DVL antagonizes the action of GSK3B. When GSK3B activity is inhibited the complex dissociates, CTNNB1 is dephosphorylated and is no longer targeted for destruction. The stabilized protein translocates to the nucleus, where it binds TCF/LEF-1 family members, BCL9, BCL9L and possibly also RUVBL1 and CHD8. Interacts with TAX1BP3 (via the PDZ domain); this interaction inhibits the transcriptional activity of CTNNB1. Interacts with AJAP1, BAIAP1 and CTNNA3. Interacts with TRPV4; the TRPV4 and CTNNB1 complex can interact with CDH1. Interacts with VCL. The CTNNB1 and TCF4 complex interacts with PML. Interacts with XIRP1. Binds CTNNBIP and EP300. CTNNB1 forms a ternary complex with LEF1 and EP300 that is disrupted by CTNNBIP1 binding. Interacts directly with AXIN1; the interaction is regulated by CDK2 phosphorylation of AXIN1. Interacts with GLIS2. Interacts with SCRIB. Interacts with TNIK and TCF7L2. Interacts with SLC30A9. Interacts with RORA. May interact with P-cadherin/CDH3. Interacts with RNF220. Interacts with CTNND2. Interacts (via the C-terminal region) with CBY1. The complex composed, at least, of APC, CTNNB1 and GSK3B interacts with JPT1; the interaction requires the inactive form of GSK3B (phosphorylated at 'Ser-9'). Interacts with DLG5. Interacts with FAM53B; promoting translocation to the nucleus. Interacts with TMEM170B. Interacts with AHI1. Interacts with GID8. Component of an cadherin:catenin adhesion complex composed of at least of CDH26, beta-catenin/CTNNB1, alpha-catenin/CTNNA1 and p120 catenin/CTNND1. Forms a complex comprising APPL1, RUVBL2, APPL2, HDAC1 and HDAC2. Interacts with IRF2BPL; mediates the ubiquitination and degradation of CTNNB1. Interacts with AMFR. Interacts with LMBR1L. Interacts with SOX30; prevents interaction of CTNNB1 with TCF7L2/TCF4 and leads to inhibition of Wnt signaling. Interacts with SOX9; inhibiting CTNNB1 activity by competing with the binding sites of TCF/LEF within CTNNB1, thereby inhibiting the Wnt signaling. Interacts with SPN/CD43 cytoplasmic tail. Interacts (when phosphorylated at Tyr-333) with isoform M2 of PKM (PKM2); promoting transcription activation. Interacts with PKP2 (via HEAD domain). Interacts with CDH1. Interacts (when unphosphorylated) with FLYWCH1, perhaps preventing interaction of CTNNB1 with TCF4, and thereby regulating transcription activation; phosphorylation of CTNNB1 may inhibit the interaction. Interacts (via the central armadillo domains) with probable transcriptional regulator ADNP (via N-terminal region); interaction is direct and stabilizes CTNNB1 by modulating its phosphorylation by glycogen synthase kinase-3 beta GSK3B. Interacts with NR5A2. Interacts with DSG2; the interaction promotes localization of CTNNB1 at cell junctions thus reducing its nuclear localization and subsequent transcription of CTNNB1/TCF-target genes. Post-translationally, phosphorylation at Ser-552 by AMPK promotes stabilization of the protein, enhancing TCF/LEF-mediated transcription. Phosphorylation by GSK3B requires prior phosphorylation of Ser-45 by another kinase. Phosphorylation proceeds then from Thr-41 to Ser-37 and Ser-33. Phosphorylated by NEK2. EGF stimulates tyrosine phosphorylation. Phosphorylated on Ser-33 and Ser-37 by HIPK2 and GSK3B, this phosphorylation triggers proteasomal degradation. Phosphorylation on Ser-191 and Ser-246 by CDK5. Phosphorylation by CDK2 regulates insulin internalization. Phosphorylation by PTK6 at Tyr-64, Tyr-142, Tyr-331 and/or Tyr-333 with the predominant site at Tyr-64 is not essential for inhibition of transcriptional activity. Phosphorylation by SRC at Tyr-333 promotes interaction with isoform M2 of PKM (PKM2); promoting transcription activation. Ubiquitinated by the SCF(BTRC) E3 ligase complex when phosphorylated by GSK3B, leading to its degradation. Ubiquitinated by a E3 ubiquitin ligase complex containing UBE2D1, SIAH1, CACYBP/SIP, SKP1, APC and TBL1X, leading to its subsequent proteasomal degradation. Ubiquitinated and degraded following interaction with SOX9. Ubiquitinated via 'Lys-11'- and 'Lys-29'-linked ubiquitin chains by UBR5, leading to its stabilization. In terms of processing, S-nitrosylation at Cys-619 within adherens junctions promotes VEGF-induced, NO-dependent endothelial cell permeability by disrupting interaction with E-cadherin, thus mediating disassembly adherens junctions. Post-translationally, O-glycosylation at Ser-23 decreases nuclear localization and transcriptional activity, and increases localization to the plasma membrane and interaction with E-cadherin CDH1. Deacetylated at Lys-49 by SIRT1. Expressed in cerebellar granule neurons (at protein level). Expressed in the intestinal epithelium (at protein level). Abundantly expressed in the tooth, skin, lung, kidney, eye and brain with weak expression in the liver and heart.

Its subcellular location is the cytoplasm. It localises to the nucleus. It is found in the cytoskeleton. The protein localises to the cell junction. The protein resides in the adherens junction. Its subcellular location is the cell membrane. It localises to the microtubule organizing center. It is found in the centrosome. The protein localises to the spindle pole. The protein resides in the synapse. Its subcellular location is the cilium basal body. Its function is as follows. Key downstream component of the canonical Wnt signaling pathway. In the absence of Wnt, forms a complex with AXIN1, AXIN2, APC, CSNK1A1 and GSK3B that promotes phosphorylation on N-terminal Ser and Thr residues and ubiquitination of CTNNB1 via BTRC and its subsequent degradation by the proteasome. In the presence of Wnt ligand, CTNNB1 is not ubiquitinated and accumulates in the nucleus, where it acts as a coactivator for transcription factors of the TCF/LEF family, leading to activate Wnt responsive genes. Also acts as a coactivator for other transcription factors, such as NR5A2. Promotes epithelial to mesenchymal transition/mesenchymal to epithelial transition (EMT/MET) via driving transcription of CTNNB1/TCF-target genes. Involved in the regulation of cell adhesion, as component of an E-cadherin:catenin adhesion complex. Acts as a negative regulator of centrosome cohesion. Involved in the CDK2/PTPN6/CTNNB1/CEACAM1 pathway of insulin internalization. Blocks anoikis of malignant kidney and intestinal epithelial cells and promotes their anchorage-independent growth by down-regulating DAPK2. Disrupts PML function and PML-NB formation by inhibiting RANBP2-mediated sumoylation of PML. Promotes neurogenesis by maintaining sympathetic neuroblasts within the cell cycle. Involved in chondrocyte differentiation via interaction with SOX9: SOX9-binding competes with the binding sites of TCF/LEF within CTNNB1, thereby inhibiting the Wnt signaling. Acts as a positive regulator of odontoblast differentiation during mesenchymal tooth germ formation, via promoting the transcription of differentiation factors such as LEF1, BMP2 and BMP4. Activity is repressed in a MSX1-mediated manner at the bell stage of mesenchymal tooth germ formation which prevents premature differentiation of odontoblasts. The sequence is that of Catenin beta-1 from Mus musculus (Mouse).